The sequence spans 1836 residues: MARPSLCTLVPLGPECLRPFTRESLAAIEQRAVEEEARLQRNKQMEIEEPERKPRSDLEAGKNLPMIYGDPPPEVIGIPLEDLDPYYSNKKTFIVLNKGKAIFRFSATPALYLLSPFSVVRRGAIKVLIHALFSMFIMITILTNCVFMTMSDPPPWSKNVEYTFTGIYTFESLIKILARGFCVDDFTFLRDPWNWLDFSVIMMAYLTEFVDLGNISALRTFRVLRALKTITVIPGLKTIVGALIQSVKKLSDVMILTVFCLSVFALVGLQLFMGNLRQKCVRWPPPFNDTNTTWYSNDTWYGNDTWYGNEMWYGNDSWYANDTWNSHASWATNDTFDWDAYISDEGNFYFLEGSNDALLCGNSSDAGHCPEGYECIKTGRNPNYGYTSYDTFSWAFLALFRLMTQDYWENLFQLTLRAAGKTYMIFFVVIIFLGSFYLINLILAVVAMAYAEQNEATLAEDKEKEEEFQQMLEKFKKHQEELEKAKAAQALEGGEADGDPAHGKDCNGSLDTSQGEKGAPRQSSSGDSGISDAMEELEEAHQKCPPWWYKCAHKVLIWNCCAPWLKFKNIIHLIVMDPFVDLGITICIVLNTLFMAMEHYPMTEHFDNVLTVGNLVFTGIFTAEMVLKLIAMDPYEYFQQGWNIFDSIIVTLSLVELGLANVQGLSVLRSFRLLRVFKLAKSWPTLNMLIKIIGNSVGALGNLTLVLAIIVFIFAVVGMQLFGKSYKECVCKIALDCNLPRWHMHDFFHSFLIVFRILCGEWIETMWDCMEVAGQAMCLTVFLMVMVIGNLVVLNLFLALLLSSFSADSLAASDEDGEMNNLQIAIGRIKLGIGFAKAFLLGLLHGKILSPKDIMLSLGEADGAGEAGEAGETAPEDEKKEPPEEDLKKDNHILNHMGLADGPPSSLELDHLNFINNPYLTIQVPIASEESDLEMPTEEETDTFSEPEDSKKPPQPLYDGNSSVCSTADYKPPEEDPEEQAEENPEGEQPEECFTEACVQRWPCLYVDISQGRGKKWWTLRRACFKIVEHNWFETFIVFMILLSSGALAFEDIYIEQRRVIRTILEYADKVFTYIFIMEMLLKWVAYGFKVYFTNAWCWLDFLIVDVSIISLVANWLGYSELGPIKSLRTLRALRPLRALSRFEGMRVVVNALLGAIPSIMNVLLVCLIFWLIFSIMGVNLFAGKFYYCINTTTSERFDISEVNNKSECESLMHTGQVRWLNVKVNYDNVGLGYLSLLQVATFKGWMDIMYAAVDSREKEEQPQYEVNLYMYLYFVIFIIFGSFFTLNLFIGVIIDNFNQQKKKLGGKDIFMTEEQKKYYNAMKKLGSKKPQKPIPRPQNKIQGMVYDLVTKQAFDITIMILICLNMVTMMVETDNQSQLKVDILYNINMIFIIIFTGECVLKMLALRQYYFTVGWNIFDFVVVILSIVGLALSDLIQKYFVSPTLFRVIRLARIGRVLRLIRGAKGIRTLLFALMMSLPALFNIGLLLFLVMFIYSIFGMSNFAYVKKESGIDDMFNFETFGNSIICLFEITTSAGWDGLLNPILNSGPPDCDPNLENPGTSVKGDCGNPSIGICFFCSYIIISFLIVVNMYIAIILENFNVATEESSEPLGEDDFEMFYETWEKFDPDATQFIAYSRLSDFVDTLQEPLRIAKPNKIKLITLDLPMVPGDKIHCLDILFALTKEVLGDSGEMDALKQTMEEKFMAANPSKVSYEPITTTLKRKHEEVCAIKIQRAYRRHLLQRSMKQASYMYRHSHDGSGDDAPEKEGLLANTMSKMYGHENGNSSSPSPEEKGEAGDAGPTMGLMPISPSDTAWPPAPPPGQTVRPGVKESLV.

Residues Met-1–Ala-131 are Cytoplasmic-facing. Positions Leu-39–Ala-60 are enriched in basic and acidic residues. Residues Leu-39–Asn-63 are disordered. The stretch at Leu-113–Asn-454 is one I repeat. A helical membrane pass occupies residues Leu-132–Met-150. Residues Ser-151 to Ser-157 are Extracellular-facing. A helical membrane pass occupies residues Lys-158–Ala-178. Over Arg-179–Pro-192 the chain is Cytoplasmic. The helical transmembrane segment at Trp-193–Val-210 threads the bilayer. Topologically, residues Asp-211 to Ser-216 are extracellular. N-linked (GlcNAc...) asparagine glycosylation occurs at Asn-214. Residues Ala-217 to Ile-233 form a helical membrane-spanning segment. Residues Pro-234–Asp-252 lie on the Cytoplasmic side of the membrane. The chain crosses the membrane as a helical span at residues Val-253–Phe-272. Topologically, residues Met-273–Thr-391 are extracellular. Cysteines 280 and 360 form a disulfide. N-linked (GlcNAc...) asparagine glycosylation is found at Asn-288, Asn-291, Asn-297, Asn-303, Asn-315, Asn-321, Asn-333, and Asn-362. A disulfide bridge links Cys-369 with Cys-375. The pore-forming intramembrane region spans Phe-392 to Leu-416. Residues Arg-417 to Tyr-423 lie on the Extracellular side of the membrane. Residues Met-424–Ala-444 traverse the membrane as a helical segment. Over Val-445 to Pro-578 the chain is Cytoplasmic. Residues Gly-493–Ile-530 are disordered. Positions Ser-509 to Ser-528 are enriched in polar residues. One copy of the II repeat lies at Cys-560–Gly-832. Residues Phe-579–Met-597 traverse the membrane as a helical segment. Topologically, residues Glu-598–Asn-608 are extracellular. A helical membrane pass occupies residues Val-609 to Lys-628. Residues Leu-629–Trp-642 lie on the Cytoplasmic side of the membrane. A helical membrane pass occupies residues Asn-643 to Val-662. Residues Gln-663–Gly-664 are Extracellular-facing. Residues Leu-665–Ser-682 form a helical membrane-spanning segment. The Cytoplasmic segment spans residues Trp-683–Gly-698. Residues Ala-699–Val-717 traverse the membrane as a helical segment. Residues Gly-718 to Asp-746 lie on the Extracellular side of the membrane. Residues Cys-731 and Cys-737 are joined by a disulfide bond. An intramembrane region (pore-forming) is located at residues Phe-747–Trp-767. Residues Asp-768–Cys-778 lie on the Extracellular side of the membrane. A disulfide bond links Cys-769 and Cys-778. A helical membrane pass occupies residues Leu-779–Phe-797. Topologically, residues Leu-798–Trp-1032 are cytoplasmic. Disordered regions lie at residues Gly-863–Glu-885 and Glu-930–Glu-992. The segment covering Glu-876 to Glu-885 has biased composition (basic and acidic residues). Composition is skewed to acidic residues over residues Glu-930 to Pro-947 and Glu-975 to Glu-992. One copy of the III repeat lies at Arg-1013–Leu-1326. A helical transmembrane segment spans residues Phe-1033–Phe-1050. Topologically, residues Glu-1051–Thr-1063 are extracellular. Residues Ile-1064 to Leu-1082 traverse the membrane as a helical segment. Over Lys-1083–Ala-1096 the chain is Cytoplasmic. Residues Trp-1097–Asn-1115 traverse the membrane as a helical segment. Over Trp-1116–Gly-1123 the chain is Extracellular. A helical membrane pass occupies residues Pro-1124–Arg-1142. Over Phe-1143–Ser-1159 the chain is Cytoplasmic. A helical membrane pass occupies residues Ile-1160–Val-1179. Residues Asn-1180–Val-1230 lie on the Extracellular side of the membrane. A disulfide bridge links Cys-1189 with Cys-1209. N-linked (GlcNAc...) asparagine glycans are attached at residues Asn-1191 and Asn-1205. Positions Gly-1231–Ala-1252 form an intramembrane region, pore-forming. The Extracellular segment spans residues Ala-1253–Leu-1269. A helical transmembrane segment spans residues Tyr-1270–Ile-1291. The Cytoplasmic segment spans residues Gly-1292 to Ala-1354. Positions Ile-1310–Met-1312 are important for rapid channel inactivation. Residues Ile-1335–Gln-1633 form an IV repeat. Residues Phe-1355–Val-1372 form a helical membrane-spanning segment. Residues Glu-1373 to Asp-1383 lie on the Extracellular side of the membrane. Residues Ile-1384 to Leu-1402 traverse the membrane as a helical segment. The Cytoplasmic portion of the chain corresponds to Lys-1403 to Val-1414. Residues Gly-1415–Ala-1432 traverse the membrane as a helical segment. At Leu-1433–Thr-1445 the chain is on the extracellular side. A helical membrane pass occupies residues Leu-1446–Ile-1462. Residues Arg-1463–Ala-1481 lie on the Cytoplasmic side of the membrane. The chain crosses the membrane as a helical span at residues Leu-1482–Phe-1499. Over Gly-1500–Thr-1521 the chain is Extracellular. Positions Phe-1522–Pro-1544 form an intramembrane region, pore-forming. Residues Ile-1545 to Gly-1574 are Extracellular-facing. Cys-1553 and Cys-1568 are joined by a disulfide. Residues Ile-1575–Ile-1597 traverse the membrane as a helical segment. At Leu-1598 to Val-1836 the chain is on the cytoplasmic side. Positions Glu-1727–His-1756 constitute an IQ domain. Residues Lys-1778–Val-1836 form a disordered region.

It belongs to the sodium channel (TC 1.A.1.10) family. Nav1.4/SCN4A subfamily. In terms of assembly, the Nav1.4 voltage-gated sodium channel consists of an ion-conducting alpha subunit SCN4A which is functional on its own and a regulatory beta subunit SCN1B. SCN1B strongly enhances the presence of SCN4A at the cell surface. SCN1B is also required for rapid channel inactivation and recovery after inactivation. It prevents the decrease of channel activity in response to repetitive, high-frequency depolarizations. Interacts with the syntrophins SNTA1, SNTB1 and SNTB2 (via PDZ domain); probably links SCN4A to the actin cytoskeleton and the extracellular matrix via the dystrophin-associated protein complex and regulates its localization in muscle cells. Interacts with TMEM233; probable regulator of the channel.

It localises to the cell membrane. The catalysed reaction is Na(+)(in) = Na(+)(out). Its activity is regulated as follows. The channel is inhibited by tetrodotoxin and saxitoxin. Inhibited by the conotoxin GVIIJ. Pore-forming subunit of Nav1.4, a voltage-gated sodium (Nav) channel that directly mediates the depolarizing phase of action potentials in excitable membranes. Navs, also called VGSCs (voltage-gated sodium channels) or VDSCs (voltage-dependent sodium channels), operate by switching between closed and open conformations depending on the voltage difference across the membrane. In the open conformation they allow Na(+) ions to selectively pass through the pore, along their electrochemical gradient. The influx of Na+ ions provokes membrane depolarization, initiating the propagation of electrical signals throughout cells and tissues. Highly expressed in skeletal muscles, Nav1.4 generates the action potential crucial for muscle contraction. This chain is Sodium channel protein type 4 subunit alpha, found in Homo sapiens (Human).